The primary structure comprises 397 residues: 3-ketoacyl-CoA thiolase, mitochondrial (397 aa).

The N-terminal 16 residues, 1-16 (MALLRGVFIVAAKRTP), are a transit peptide targeting the mitochondrion; not cleaved. Lys25 carries the N6-acetyllysine; alternate modification. Lys25 is modified (N6-succinyllysine; alternate). Lys45 carries the N6-succinyllysine modification. Cys92 acts as the Acyl-thioester intermediate in catalysis. The residue at position 119 (Thr119) is a Phosphothreonine. Ser121 carries the post-translational modification Phosphoserine. Tyr127 bears the Phosphotyrosine mark. Thr136 bears the Phosphothreonine mark. N6-acetyllysine; alternate occurs at positions 137, 143, 158, 171, 191, and 209. Residues Lys137, Lys143, Lys158, Lys171, Lys191, and Lys209 each carry the N6-succinyllysine; alternate modification. Residues Lys211, Lys212, and Lys214 each carry the N6-succinyllysine modification. CoA contacts are provided by Arg224 and Thr227. Position 240 is an N6-succinyllysine (Lys240). An N6-acetyllysine modification is found at Lys241. Ser251 provides a ligand contact to CoA. N6-acetyllysine occurs at positions 269 and 270. The residue at position 305 (Lys305) is an N6-acetyllysine; alternate. The residue at position 305 (Lys305) is an N6-succinyllysine; alternate. Residue Ser310 is modified to Phosphoserine. Residue Lys312 is modified to N6-acetyllysine; alternate. The residue at position 312 (Lys312) is an N6-succinyllysine; alternate. Ser333 is modified (phosphoserine). Residue Lys340 is modified to N6-acetyllysine. At Ser344 the chain carries Phosphoserine. Position 375 is an N6-acetyllysine (Lys375). Cys382 serves as the catalytic Proton donor/acceptor.

It belongs to the thiolase-like superfamily. Thiolase family. As to quaternary structure, homotetramer. Interacts with BNIP3. In terms of tissue distribution, expressed in liver, brown adipose tissue and heart (at protein level).

The protein resides in the mitochondrion. The enzyme catalyses an acyl-CoA + acetyl-CoA = a 3-oxoacyl-CoA + CoA. The catalysed reaction is 2 acetyl-CoA = acetoacetyl-CoA + CoA. It carries out the reaction acetyl-CoA + H2O = acetate + CoA + H(+). It catalyses the reaction propanoyl-CoA + H2O = propanoate + CoA + H(+). The enzyme catalyses butanoyl-CoA + H2O = butanoate + CoA + H(+). The catalysed reaction is hexanoyl-CoA + H2O = hexanoate + CoA + H(+). It carries out the reaction octanoyl-CoA + H2O = octanoate + CoA + H(+). It catalyses the reaction decanoyl-CoA + H2O = decanoate + CoA + H(+). The enzyme catalyses dodecanoyl-CoA + H2O = dodecanoate + CoA + H(+). The catalysed reaction is tetradecanoyl-CoA + H2O = tetradecanoate + CoA + H(+). It carries out the reaction hexadecanoyl-CoA + H2O = hexadecanoate + CoA + H(+). It functions in the pathway lipid metabolism; fatty acid beta-oxidation. With respect to regulation, the 3-oxoacetyl-CoA thiolase activity is inhibited by acetyl-CoA while the acetyl-CoA hydrolase activity is inhibited by acetoacetyl-CoA. Functionally, in the production of energy from fats, this is one of the enzymes that catalyzes the last step of the mitochondrial beta-oxidation pathway, an aerobic process breaking down fatty acids into acetyl-CoA. Using free coenzyme A/CoA, catalyzes the thiolytic cleavage of medium- to long-chain unbranched 3-oxoacyl-CoAs into acetyl-CoA and a fatty acyl-CoA shortened by two carbon atoms. Also catalyzes the condensation of two acetyl-CoA molecules into acetoacetyl-CoA and could be involved in the production of ketone bodies. Also displays hydrolase activity on various fatty acyl-CoAs. Thereby, could be responsible for the production of acetate in a side reaction to beta-oxidation. Abolishes BNIP3-mediated apoptosis and mitochondrial damage. This is 3-ketoacyl-CoA thiolase, mitochondrial (Acaa2) from Rattus norvegicus (Rat).